The chain runs to 251 residues: Low molecular mass lipoprotein PBMHPC-21 (251 aa).

An N-terminal signal peptide occupies residues methionine 1–alanine 16.

Belongs to the 30 kDa lipoprotein family.

It localises to the secreted. The sequence is that of Low molecular mass lipoprotein PBMHPC-21 from Bombyx mori (Silk moth).